Here is a 77-residue protein sequence, read N- to C-terminus: MKEQKLIHEGLIIESLPNGMFRVRLDNEDLILGYVSGRIRRSFIRILPGDRVKIEVSRYDSTRGRIIYRLRNKDSND.

The S1-like domain occupies 1-71; that stretch reads MKEQKLIHEG…TRGRIIYRLR (71 aa).

This sequence belongs to the IF-1 family. In terms of assembly, component of the 30S ribosomal translation pre-initiation complex which assembles on the 30S ribosome in the order IF-2 and IF-3, IF-1 and N-formylmethionyl-tRNA(fMet); mRNA recruitment can occur at any time during PIC assembly.

The protein localises to the plastid. It localises to the chloroplast. In terms of biological role, one of the essential components for the initiation of protein synthesis. Stabilizes the binding of IF-2 and IF-3 on the 30S subunit to which N-formylmethionyl-tRNA(fMet) subsequently binds. Helps modulate mRNA selection, yielding the 30S pre-initiation complex (PIC). Upon addition of the 50S ribosomal subunit IF-1, IF-2 and IF-3 are released leaving the mature 70S translation initiation complex. This Asarum canadense (Wild ginger) protein is Translation initiation factor IF-1, chloroplastic.